A 429-amino-acid chain; its full sequence is UDP-N-acetylglucosamine 1-carboxyvinyltransferase (429 aa).

Residue Lys22 to Asn23 participates in phosphoenolpyruvate binding. Arg102 is a UDP-N-acetyl-alpha-D-glucosamine binding site. The active-site Proton donor is the Cys126. Position 126 is a 2-(S-cysteinyl)pyruvic acid O-phosphothioketal (Cys126). UDP-N-acetyl-alpha-D-glucosamine is bound by residues Arg131–Leu135, Lys171–Val174, Asp316, and Ile338.

It belongs to the EPSP synthase family. MurA subfamily.

The protein localises to the cytoplasm. It catalyses the reaction phosphoenolpyruvate + UDP-N-acetyl-alpha-D-glucosamine = UDP-N-acetyl-3-O-(1-carboxyvinyl)-alpha-D-glucosamine + phosphate. It participates in cell wall biogenesis; peptidoglycan biosynthesis. Cell wall formation. Adds enolpyruvyl to UDP-N-acetylglucosamine. This is UDP-N-acetylglucosamine 1-carboxyvinyltransferase from Chelativorans sp. (strain BNC1).